Reading from the N-terminus, the 655-residue chain is tRNA-guanine(15) transglycosylase (655 aa).

Asp-89 (nucleophile) is an active-site residue. Residues Asp-124 and Ala-195 each coordinate substrate. Residues Cys-281, Cys-283, and Cys-286 each contribute to the Zn(2+) site. In terms of domain architecture, PUA spans 577 to 652 (KYRVVVNKEA…LAVKVRGGLK (76 aa)).

Belongs to the archaeosine tRNA-ribosyltransferase family. Zn(2+) serves as cofactor.

The catalysed reaction is guanosine(15) in tRNA + 7-cyano-7-deazaguanine = 7-cyano-7-carbaguanosine(15) in tRNA + guanine. It participates in tRNA modification; archaeosine-tRNA biosynthesis. Exchanges the guanine residue with 7-cyano-7-deazaguanine (preQ0) at position 15 in the dihydrouridine loop (D-loop) of archaeal tRNAs. Can also utilize guanine as substrate. This is tRNA-guanine(15) transglycosylase from Methanocaldococcus jannaschii (strain ATCC 43067 / DSM 2661 / JAL-1 / JCM 10045 / NBRC 100440) (Methanococcus jannaschii).